The sequence spans 594 residues: UvrABC system protein C (594 aa).

The 78-residue stretch at 14–91 (DQPGCYLMKD…IKKYDPKYNI (78 aa)) folds into the GIY-YIG domain. Residues 196–231 (KEIRSELETKMYEASEKLEFERAKELRDQIAHIDAI) form the UVR domain.

It belongs to the UvrC family. Interacts with UvrB in an incision complex.

The protein localises to the cytoplasm. Its function is as follows. The UvrABC repair system catalyzes the recognition and processing of DNA lesions. UvrC both incises the 5' and 3' sides of the lesion. The N-terminal half is responsible for the 3' incision and the C-terminal half is responsible for the 5' incision. This is UvrABC system protein C from Bacillus mycoides (strain KBAB4) (Bacillus weihenstephanensis).